We begin with the raw amino-acid sequence, 366 residues long: Glutamate 5-kinase (366 aa).

Lysine 17 is an ATP binding site. Positions 57, 144, and 156 each coordinate substrate. ATP is bound by residues 176–177 (SD) and 216–222 (TGGMASK). The PUA domain occupies 278 to 352 (QGILHIDEGA…GKSTQELPAE (75 aa)).

Belongs to the glutamate 5-kinase family.

The protein resides in the cytoplasm. It carries out the reaction L-glutamate + ATP = L-glutamyl 5-phosphate + ADP. The protein operates within amino-acid biosynthesis; L-proline biosynthesis; L-glutamate 5-semialdehyde from L-glutamate: step 1/2. Its function is as follows. Catalyzes the transfer of a phosphate group to glutamate to form L-glutamate 5-phosphate. The polypeptide is Glutamate 5-kinase (Rhodococcus opacus (strain B4)).